The sequence spans 195 residues: Segregation and condensation protein B (195 aa).

It belongs to the ScpB family. As to quaternary structure, homodimer. Homodimerization may be required to stabilize the binding of ScpA to the Smc head domains. Component of a cohesin-like complex composed of ScpA, ScpB and the Smc homodimer, in which ScpA and ScpB bind to the head domain of Smc. The presence of the three proteins is required for the association of the complex with DNA.

It is found in the cytoplasm. Its function is as follows. Participates in chromosomal partition during cell division. May act via the formation of a condensin-like complex containing Smc and ScpA that pull DNA away from mid-cell into both cell halves. This chain is Segregation and condensation protein B, found in Clostridium perfringens (strain SM101 / Type A).